Reading from the N-terminus, the 106-residue chain is NADH-quinone oxidoreductase subunit K (106 aa).

The next 3 membrane-spanning stretches (helical) occupy residues 10 to 30 (IHYYLILAMIIFTIGVAGVMV), 35 to 55 (VLIFMSVELILNSVNLVFVTF), and 67 to 87 (VVFFVMAIAAAEAAIGLAIVI).

The protein belongs to the complex I subunit 4L family. In terms of assembly, NDH-1 is composed of 14 different subunits. Subunits NuoA, H, J, K, L, M, N constitute the membrane sector of the complex.

The protein localises to the cell inner membrane. The catalysed reaction is a quinone + NADH + 5 H(+)(in) = a quinol + NAD(+) + 4 H(+)(out). Its function is as follows. NDH-1 shuttles electrons from NADH, via FMN and iron-sulfur (Fe-S) centers, to quinones in the respiratory chain. The immediate electron acceptor for the enzyme in this species is believed to be ubiquinone. Couples the redox reaction to proton translocation (for every two electrons transferred, four hydrogen ions are translocated across the cytoplasmic membrane), and thus conserves the redox energy in a proton gradient. The protein is NADH-quinone oxidoreductase subunit K of Leptospira interrogans serogroup Icterohaemorrhagiae serovar copenhageni (strain Fiocruz L1-130).